The following is a 184-amino-acid chain: Photosystem I assembly protein Ycf4 (184 aa).

2 helical membrane passes run 20-42 (VNLC…GFSS) and 57-79 (IAFI…LGLY).

This sequence belongs to the Ycf4 family.

It is found in the plastid. The protein resides in the chloroplast thylakoid membrane. In terms of biological role, seems to be required for the assembly of the photosystem I complex. The sequence is that of Photosystem I assembly protein Ycf4 from Adiantum capillus-veneris (Maidenhair fern).